The following is a 185-amino-acid chain: Photosystem I assembly protein Ycf4 (185 aa).

A run of 2 helical transmembrane segments spans residues 24 to 44 (YLIG…SISS) and 66 to 86 (IIMG…WYLV).

This sequence belongs to the Ycf4 family.

Its subcellular location is the cellular thylakoid membrane. In terms of biological role, seems to be required for the assembly of the photosystem I complex. This is Photosystem I assembly protein Ycf4 from Prochlorococcus marinus (strain MIT 9515).